We begin with the raw amino-acid sequence, 478 residues long: Cell division protein FtsZ homolog 2-1, chloroplastic (478 aa).

The interval 86 to 112 is disordered; that stretch reads EGTSTIVNPRKETSSGPVVEDFEEPSA. 128 to 132 contributes to the GTP binding site; it reads GGGSN. At Ser143 the chain carries Phosphoserine; by PGK1. GTP contacts are provided by residues 217–219, Glu248, and Arg252; that span reads GTG. Thr286 carries the post-translational modification Phosphothreonine; by PGK1. A GTP-binding site is contributed by Asp296.

This sequence belongs to the FtsZ family. In terms of assembly, aggregates to form a contractile ring-like structure; contraction of the ring was accompanied by an increase in the filament turnover rate. Self-interacts and binds to FTSZ1 in heteromers to form two morphologically distinct types of filaments, termed type-I (smooth filaments) and -II (rough filaments), in a GTP-dependent manner; the GDP-induced disassembly is inhibited by ARC6. Interacts (via C-terminus) with ARC6; this interaction enables ARC3 binding to FTSZ2. Part of a complex made of ARC3, ARC6, FTSZ1 and FTSZ2. Binds to MCD1 in an ARC6-dependent manner. Binds to CDP1/PARC6. Part of a complex made of CDP1/PARC6, ARC3 and FtsZ proteins in the middle of the plastid; this complex enhances the dynamics of Z rings during chloroplast division. Binds to PGK1. Filaments containing FTSZ2-1 are stabilized when in complex with GTP but destabilized after conversion of GTP into GDP; ARC6 conteracts this destabilisation by preventing the dissociation of GDP-bound FTSZ2 molecules thus inhibiting filament disassembly whereas ARC3 promotes GTPase activity thus accelerating the conversion of GTP into GDP and triggering FtsZ2 filaments disassembly. Post-translationally, phosphorylation at Ser-143 is necessary for interactions with ARC3, ARC6, FTSZ1 and FTSZ2-2. Phosphorylations at Ser-143 and Thr-286 are required for the formation of contractile ring at the chloroplast midpoint.

The protein resides in the plastid. It is found in the chloroplast stroma. It localises to the chloroplast thylakoid membrane. GTPase activity is enhanced by ARC3. Its function is as follows. Exhibits GTPase activity which converts GTP ligands to GDP. Component of the plastid division machinery consisting in a binary fission accomplished by the simultaneous constriction of the FtsZ ring on the stromal side of the inner envelope membrane, and the ARC5 ring on the cytosolic side of the outer envelope membrane. Required for plastid division in a dose-dependent manner. In the vegetative shoot apex, at the shoot apical meristem (SAM), where the proplastid-to-chloroplast transition takes place, major contributor of plastid division in the L1 and L3 layers and contributes equally with FTSZ1 in the L2 layer. This chain is Cell division protein FtsZ homolog 2-1, chloroplastic, found in Arabidopsis thaliana (Mouse-ear cress).